The sequence spans 426 residues: Glutamate-1-semialdehyde 2,1-aminomutase (426 aa).

At Lys-265 the chain carries N6-(pyridoxal phosphate)lysine.

Belongs to the class-III pyridoxal-phosphate-dependent aminotransferase family. HemL subfamily. In terms of assembly, homodimer. Pyridoxal 5'-phosphate is required as a cofactor.

The protein resides in the cytoplasm. The enzyme catalyses (S)-4-amino-5-oxopentanoate = 5-aminolevulinate. Its pathway is porphyrin-containing compound metabolism; protoporphyrin-IX biosynthesis; 5-aminolevulinate from L-glutamyl-tRNA(Glu): step 2/2. This chain is Glutamate-1-semialdehyde 2,1-aminomutase, found in Actinobacillus pleuropneumoniae serotype 3 (strain JL03).